Here is a 573-residue protein sequence, read N- to C-terminus: MADQKFAPTQDGPPSDVERIKEESNYLRGTLAESLNEPLSAGIPDDDNRLMKFHGSYLQDDRDLREERRRQKLEPAYQFMVRVRLPGGVATPKQWLAMDDLAHRYGNGTLRLTTRQTFQMHGILKWNMKKNIQGINAALMDTIAACGDVNRNVMSTPNPYQSEVHGEVYDWAKKLSEALLPKTRAYHEIWLDEEKVAGTPQQDEVEPMYGPLYLPRKFKIGVAVPPANDVDIFSQDIGFIAILEEGKLTGFNVACGGGMGMTHGDTKTYPQLGRIIGFCEPQQIMDVAEKLITIQRDYGNRSVRKYARFKYTIDRRGLDWLKNELHARLGWELGEARPFQFDHNGDRYGWTKGVKGRWHLTLFIQNGRIQDTDDYQLMTGLREIAKIHTGEFRLTGNQNVIISNITAAKKKAIQAIVETYRLTDGQHVSALRRNSMACVAFPTCGLAMAESERYLPSLIDKLEFILDEAGIREEDIVIRMAGCPNGCSRAALAEIGFIGKAPGKYNLYLGGGFAGERLSKMYKENIGEAEILETLEPILFAYAKEREEGEHFGDFVIRKGYVKAVESGTDFHQ.

[4Fe-4S] cluster is bound by residues C438, C444, C483, and C487. Residue C487 coordinates siroheme.

The protein belongs to the nitrite and sulfite reductase 4Fe-4S domain family. In terms of assembly, alpha(8)-beta(8). The alpha component is a flavoprotein, the beta component is a hemoprotein. Siroheme serves as cofactor. Requires [4Fe-4S] cluster as cofactor.

The enzyme catalyses hydrogen sulfide + 3 NADP(+) + 3 H2O = sulfite + 3 NADPH + 4 H(+). It functions in the pathway sulfur metabolism; hydrogen sulfide biosynthesis; hydrogen sulfide from sulfite (NADPH route): step 1/1. Component of the sulfite reductase complex that catalyzes the 6-electron reduction of sulfite to sulfide. This is one of several activities required for the biosynthesis of L-cysteine from sulfate. The protein is Sulfite reductase [NADPH] hemoprotein beta-component of Shouchella clausii (strain KSM-K16) (Alkalihalobacillus clausii).